A 122-amino-acid polypeptide reads, in one-letter code: Large ribosomal subunit protein uL14 (122 aa).

This sequence belongs to the universal ribosomal protein uL14 family. In terms of assembly, part of the 50S ribosomal subunit. Forms a cluster with proteins L3 and L19. In the 70S ribosome, L14 and L19 interact and together make contacts with the 16S rRNA in bridges B5 and B8.

Binds to 23S rRNA. Forms part of two intersubunit bridges in the 70S ribosome. This Pseudomonas entomophila (strain L48) protein is Large ribosomal subunit protein uL14.